A 769-amino-acid chain; its full sequence is Serine protease HtrA-like (769 aa).

Residues 1 to 20 (MDIGKKHVIPKSQYRRKRRE) show a composition bias toward basic residues. A disordered region spans residues 1 to 390 (MDIGKKHVIP…ATSKLNKGRA (390 aa)). Basic and acidic residues-rich tracts occupy residues 21–64 (FFHN…ERFK) and 71–108 (LEQRNRDVNENKAEESKSNQDSKSAYNRDHYLTDDVSK). Polar residues predominate over residues 126–137 (YEQNSEATLSTK). Over residues 138 to 186 (STDKVESTEMRKLSSDKNKVGHEEQHVLSKPSEHDKETRIDSESSRTDS) the composition is skewed to basic and acidic residues. Over residues 247–262 (QQSQNEQTKTYTYGDS) the composition is skewed to polar residues. Composition is skewed to basic and acidic residues over residues 264 to 296 (QNDKSNHENDLSHHIPSISDDKDNVMRENHIVD) and 310 to 330 (KTDDDRKLDEKIHVEDKHKQN). Residues 331–347 (ADSSETVGYQSQSTASH) are compositionally biased toward polar residues. The span at 348-364 (RSTEKRNISINDHDKLN) shows a compositional bias: basic and acidic residues. Residues 365–390 (GQKTNTKTSANNNQKKATSKLNKGRA) are compositionally biased toward polar residues. A helical membrane pass occupies residues 410-430 (LVILMGIIILIVILNAIFNNV). Catalysis depends on charge relay system residues His-504, Asp-534, and Ser-619. The PDZ domain maps to 680–733 (IVSLNSFERQAVKLPGKVKNGVVVDQVDNNGLADQSGLKKGDVITELDGKLLED).

Belongs to the peptidase S1C family.

The protein resides in the cell membrane. This is Serine protease HtrA-like from Staphylococcus aureus (strain NCTC 8325 / PS 47).